A 322-amino-acid chain; its full sequence is HPr kinase/phosphorylase (322 aa).

Active-site residues include His-146 and Lys-167. 161-168 (GDSGLGKS) contributes to the ATP binding site. Ser-168 contributes to the Mg(2+) binding site. Asp-185 functions as the Proton acceptor; for phosphorylation activity. Proton donor; for dephosphorylation activity in the catalytic mechanism. An important for the catalytic mechanism of both phosphorylation and dephosphorylation region spans residues 209–218 (LEVRGLGLLD). Residue Glu-210 coordinates Mg(2+). Arg-250 is an active-site residue. The segment at 271-276 (QVAAGR) is important for the catalytic mechanism of dephosphorylation.

The protein belongs to the HPrK/P family. As to quaternary structure, homohexamer. The cofactor is Mg(2+).

The catalysed reaction is [HPr protein]-L-serine + ATP = [HPr protein]-O-phospho-L-serine + ADP + H(+). The enzyme catalyses [HPr protein]-O-phospho-L-serine + phosphate + H(+) = [HPr protein]-L-serine + diphosphate. Catalyzes the ATP- as well as the pyrophosphate-dependent phosphorylation of a specific serine residue in HPr, a phosphocarrier protein of the phosphoenolpyruvate-dependent sugar phosphotransferase system (PTS). HprK/P also catalyzes the pyrophosphate-producing, inorganic phosphate-dependent dephosphorylation (phosphorolysis) of seryl-phosphorylated HPr (P-Ser-HPr). In Paraburkholderia phytofirmans (strain DSM 17436 / LMG 22146 / PsJN) (Burkholderia phytofirmans), this protein is HPr kinase/phosphorylase.